The primary structure comprises 150 residues: D-aminoacyl-tRNA deacylase (150 aa).

The Gly-cisPro motif, important for rejection of L-amino acids signature appears at 140-141 (GP).

It belongs to the DTD family. In terms of assembly, homodimer.

The protein resides in the cytoplasm. It carries out the reaction glycyl-tRNA(Ala) + H2O = tRNA(Ala) + glycine + H(+). It catalyses the reaction a D-aminoacyl-tRNA + H2O = a tRNA + a D-alpha-amino acid + H(+). In terms of biological role, an aminoacyl-tRNA editing enzyme that deacylates mischarged D-aminoacyl-tRNAs. Also deacylates mischarged glycyl-tRNA(Ala), protecting cells against glycine mischarging by AlaRS. Acts via tRNA-based rather than protein-based catalysis; rejects L-amino acids rather than detecting D-amino acids in the active site. By recycling D-aminoacyl-tRNA to D-amino acids and free tRNA molecules, this enzyme counteracts the toxicity associated with the formation of D-aminoacyl-tRNA entities in vivo and helps enforce protein L-homochirality. The protein is D-aminoacyl-tRNA deacylase (DTD1) of Kluyveromyces lactis (strain ATCC 8585 / CBS 2359 / DSM 70799 / NBRC 1267 / NRRL Y-1140 / WM37) (Yeast).